The following is a 487-amino-acid chain: uncharacterized protein (487 aa).

Disordered regions lie at residues 35 to 153 (VSRK…SGDQ), 237 to 345 (NTTK…AKAL), and 358 to 395 (QKRK…SSAA). Over residues 54 to 96 (FDQEDILDTVPEQTDENEDEAGDDELESEKEELDYDEEEDDED) the composition is skewed to acidic residues. Over residues 97 to 132 (RRERTSRYTSEKKGSRKDSVEGDENKKENGQDETKR) the composition is skewed to basic and acidic residues. Residues 241–253 (SKSRGRDTRKRRS) show a composition bias toward basic residues. Positions 254–264 (SSYSSTSSSSD) are enriched in low complexity. 2 stretches are compositionally biased toward basic and acidic residues: residues 273–338 (SRSD…KHSA) and 358–383 (QKRK…KKEV). Low complexity predominate over residues 385-395 (TTVSTNTSSAA).

This is an uncharacterized protein from Caenorhabditis elegans.